The chain runs to 134 residues: Major capsid protein (134 aa).

In terms of assembly, homodimer.

It is found in the virion. Functionally, self-assembles to form a helical, filamentous nucleocapsid. The capsid proteins wrap around the DNA and maintain it in an A-form by non-specific desolvation and specific coordination of the DNA phosphate groups by positively charged residues. This certainly protects the viral DNA under conditions such as the extreme desiccation of its host. The sequence is that of Major capsid protein from Saccharolobus solfataricus rod-shaped virus 1 (SSRV1).